Here is a 612-residue protein sequence, read N- to C-terminus: Phosphopentomutase (612 aa).

At Ala-2 the chain carries N-acetylalanine. Alpha-D-glucose 1,6-bisphosphate contacts are provided by Arg-63 and Ser-165. Ser-165 serves as the catalytic Phosphoserine intermediate. The Mg(2+) site is built by Ser-165, Asp-322, Asp-324, and Asp-326. Residue Ser-165 is modified to Phosphoserine. Alpha-D-glucose 1,6-bisphosphate contacts are provided by Asp-326, Arg-327, Thr-400, Glu-424, and Lys-438.

Belongs to the phosphohexose mutase family. Monomer. Mg(2+) is required as a cofactor.

It localises to the cytoplasm. It is found in the cytosol. The catalysed reaction is alpha-D-ribose 1-phosphate = D-ribose 5-phosphate. The enzyme catalyses 2-deoxy-alpha-D-ribose 1-phosphate = 2-deoxy-D-ribose 5-phosphate. It carries out the reaction alpha-D-glucose 1-phosphate = alpha-D-glucose 6-phosphate. It catalyses the reaction O-phospho-L-seryl-[protein] + alpha-D-glucose 1-phosphate = alpha-D-glucose 1,6-bisphosphate + L-seryl-[protein]. The catalysed reaction is alpha-D-glucose 1,6-bisphosphate + L-seryl-[protein] = O-phospho-L-seryl-[protein] + alpha-D-glucose 6-phosphate. Functionally, catalyzes the conversion of the nucleoside breakdown products ribose-1-phosphate and deoxyribose-1-phosphate to the corresponding 5-phosphopentoses. Catalyzes the reversible isomerization of alpha-D-glucose 1-phosphate to alpha-D-glucose 6-phosphate but with a lower catalytic efficiency. The mechanism proceeds via the intermediate compound alpha-D-glucose 1,6-bisphosphate. In vitro, also has a low glucose 1,6-bisphosphate synthase activity which is most probably not physiologically relevant. In Pongo abelii (Sumatran orangutan), this protein is Phosphopentomutase (PGM2).